Consider the following 341-residue polypeptide: GTPase Obg (341 aa).

In terms of domain architecture, Obg spans 1-159 (MKFVDEALIK…RNLRLELRVL (159 aa)). The segment at 128-150 (TRYKSSVNRSPRQTTPGSPGESR) is disordered. Positions 129-144 (RYKSSVNRSPRQTTPG) are enriched in polar residues. An OBG-type G domain is found at 160-334 (ADVGLLGLPN…LCYALMQLID (175 aa)). Residues 166–173 (GLPNAGKS), 191–195 (FTTLH), 213–216 (DIPG), 283–286 (NKID), and 315–317 (SAI) each bind GTP. Mg(2+)-binding residues include S173 and T193.

The protein belongs to the TRAFAC class OBG-HflX-like GTPase superfamily. OBG GTPase family. As to quaternary structure, monomer. The cofactor is Mg(2+).

Its subcellular location is the cytoplasm. An essential GTPase which binds GTP, GDP and possibly (p)ppGpp with moderate affinity, with high nucleotide exchange rates and a fairly low GTP hydrolysis rate. Plays a role in control of the cell cycle, stress response, ribosome biogenesis and in those bacteria that undergo differentiation, in morphogenesis control. This Legionella pneumophila (strain Paris) protein is GTPase Obg.